The following is a 109-amino-acid chain: Large ribosomal subunit protein P1 (109 aa).

The segment at 90–109 (AAAKKEEEEEDDDMGFGLFD) is disordered.

It belongs to the eukaryotic ribosomal protein P1/P2 family. P1 and P2 exist as dimers at the large ribosomal subunit.

Functionally, plays an important role in the elongation step of protein synthesis. This is Large ribosomal subunit protein P1 from Trypanosoma cruzi.